Here is a 284-residue protein sequence, read N- to C-terminus: Pantothenate synthetase (284 aa).

30 to 37 (MGYLHEGH) contacts ATP. Residue H37 is the Proton donor of the active site. Q61 contributes to the (R)-pantoate binding site. A beta-alanine-binding site is contributed by Q61. 147 to 150 (GQKD) is a binding site for ATP. Q153 is a (R)-pantoate binding site. ATP-binding positions include V176 and 184–187 (KSSR).

The protein belongs to the pantothenate synthetase family. Homodimer.

It localises to the cytoplasm. The catalysed reaction is (R)-pantoate + beta-alanine + ATP = (R)-pantothenate + AMP + diphosphate + H(+). The protein operates within cofactor biosynthesis; (R)-pantothenate biosynthesis; (R)-pantothenate from (R)-pantoate and beta-alanine: step 1/1. Its function is as follows. Catalyzes the condensation of pantoate with beta-alanine in an ATP-dependent reaction via a pantoyl-adenylate intermediate. The sequence is that of Pantothenate synthetase from Lysinibacillus sphaericus (strain C3-41).